The primary structure comprises 599 residues: Zinc metalloproteinase dpy-31 (599 aa).

The N-terminal stretch at 1-22 (MALLKPFLSRTFSSFFATITGG) is a signal peptide. Residues 23–211 (RNLIDSIEEL…IQHGRRTKRK (189 aa)) constitute a propeptide that is removed on maturation. Residues 211–410 (KFIRSELRRW…IRLMNVIYCS (200 aa)) form the Peptidase M12A domain. Asn-251 is a glycosylation site (N-linked (GlcNAc...) asparagine). Cystine bridges form between Cys-254/Cys-409, Cys-277/Cys-298, Cys-413/Cys-433, Cys-435/Cys-444, and Cys-455/Cys-483. Residue His-306 coordinates Zn(2+). The active site involves Glu-307. Positions 310 and 316 each coordinate Zn(2+). Residues 405 to 445 (NVIYCSDSCAQKLPCQRGGYTDPRRCGRCRCPDGFTGKLCE) enclose the EGF-like domain. Residues 455 to 571 (CGGRIELTSS…KGFQAQVRAL (117 aa)) enclose the CUB domain. Asn-522 carries N-linked (GlcNAc...) asparagine glycosylation.

Zn(2+) is required as a cofactor.

The protein resides in the secreted. Inhibited by marimastat and tripeptide hydroxamic acids. Functionally, metalloprotease which cleaves the carboxyl terminus of procollagens to mature collagens. Probably involved in cuticular collagen maturation. The polypeptide is Zinc metalloproteinase dpy-31 (Brugia malayi (Filarial nematode worm)).